Reading from the N-terminus, the 72-residue chain is Subtilisin-chymotrypsin inhibitor-2B (72 aa).

Belongs to the protease inhibitor I13 (potato type I serine protease inhibitor) family.

Its function is as follows. Inhibits both subtilisin and chymotrypsin. This Hordeum vulgare (Barley) protein is Subtilisin-chymotrypsin inhibitor-2B.